Here is a 293-residue protein sequence, read N- to C-terminus: Delta(3,5)-Delta(2,4)-dienoyl-CoA isomerase, mitochondrial (293 aa).

Substrate-binding positions include 84–88 and Gly142; that span reads AGLNL.

It belongs to the enoyl-CoA hydratase/isomerase family.

It localises to the mitochondrion. The catalysed reaction is (3E,5Z)-octadienoyl-CoA = (2E,4E)-octadienoyl-CoA. It catalyses the reaction (3E,5Z,8Z,11Z,14Z)-eicosapentaenoyl-CoA = (2E,4E,8Z,11Z,14Z)-eicosapentaenoyl-CoA. It participates in lipid metabolism; fatty acid beta-oxidation. In terms of biological role, isomerization of 3-trans,5-cis-dienoyl-CoA to 2-trans,4-trans-dienoyl-CoA. This chain is Delta(3,5)-Delta(2,4)-dienoyl-CoA isomerase, mitochondrial (ech1), found in Dictyostelium discoideum (Social amoeba).